The following is a 371-amino-acid chain: Putative glutamate--cysteine ligase 2 (371 aa).

The protein belongs to the glutamate--cysteine ligase type 2 family. YbdK subfamily.

It carries out the reaction L-cysteine + L-glutamate + ATP = gamma-L-glutamyl-L-cysteine + ADP + phosphate + H(+). ATP-dependent carboxylate-amine ligase which exhibits weak glutamate--cysteine ligase activity. The chain is Putative glutamate--cysteine ligase 2 from Paraburkholderia xenovorans (strain LB400).